The sequence spans 209 residues: MSVHAIQHPLVKHKLGLMREAGISTKSFRELASEVAKLLTYEATQDLETQKTEIPGWSGEMLEVELLKGKKVTVVPILRAGLGMLDGVTDLIPSARVSVVGLYRNEETLEPVPYFEKFVGDLDERLAIVIDPMLATGGSMVATLDMLKARGCPLVKVIVLVAAPEGIARVQEAYPDVEIYTASIDERLDENGYIVPGLGDAGDKIFGTR.

5-phospho-alpha-D-ribose 1-diphosphate is bound by residues Arg79, Arg104, and 131-139 (DPMLATGGS). Uracil-binding positions include Ile194 and 199–201 (GDA). Asp200 is a 5-phospho-alpha-D-ribose 1-diphosphate binding site.

The protein belongs to the UPRTase family. Mg(2+) serves as cofactor.

It carries out the reaction UMP + diphosphate = 5-phospho-alpha-D-ribose 1-diphosphate + uracil. It functions in the pathway pyrimidine metabolism; UMP biosynthesis via salvage pathway; UMP from uracil: step 1/1. Allosterically activated by GTP. Catalyzes the conversion of uracil and 5-phospho-alpha-D-ribose 1-diphosphate (PRPP) to UMP and diphosphate. This is Uracil phosphoribosyltransferase from Chromohalobacter salexigens (strain ATCC BAA-138 / DSM 3043 / CIP 106854 / NCIMB 13768 / 1H11).